Here is a 404-residue protein sequence, read N- to C-terminus: Cysteine desulfurase IscS (404 aa).

Residues 75–76 (AT), Asn-155, Gln-183, and 203–205 (SSH) contribute to the pyridoxal 5'-phosphate site. Position 206 is an N6-(pyridoxal phosphate)lysine (Lys-206). Thr-243 provides a ligand contact to pyridoxal 5'-phosphate. Catalysis depends on Cys-328, which acts as the Cysteine persulfide intermediate. Cys-328 is a [2Fe-2S] cluster binding site.

It belongs to the class-V pyridoxal-phosphate-dependent aminotransferase family. NifS/IscS subfamily. Homodimer. Forms a heterotetramer with IscU, interacts with other sulfur acceptors. Requires pyridoxal 5'-phosphate as cofactor.

The protein localises to the cytoplasm. The catalysed reaction is (sulfur carrier)-H + L-cysteine = (sulfur carrier)-SH + L-alanine. It functions in the pathway cofactor biosynthesis; iron-sulfur cluster biosynthesis. Its function is as follows. Master enzyme that delivers sulfur to a number of partners involved in Fe-S cluster assembly, tRNA modification or cofactor biosynthesis. Catalyzes the removal of elemental sulfur atoms from cysteine to produce alanine. Functions as a sulfur delivery protein for Fe-S cluster synthesis onto IscU, an Fe-S scaffold assembly protein, as well as other S acceptor proteins. This Histophilus somni (strain 129Pt) (Haemophilus somnus) protein is Cysteine desulfurase IscS.